The chain runs to 460 residues: Chromosomal replication initiator protein DnaA (460 aa).

The tract at residues 1–91 (MSLINPKVSA…LLWQNEDKSI (91 aa)) is domain I, interacts with DnaA modulators. The segment at 91–122 (ICSIDIQVTEEKNSSSSIISKNKEESVNNLGS) is domain II. Residues 123-342 (PLDPRFTFDN…GALNKVAHTS (220 aa)) form a domain III, AAA+ region region. Gly169, Gly171, Lys172, and Thr173 together coordinate ATP. Residues 343 to 460 (LIGRSMTVES…EINQLRKMFK (118 aa)) are domain IV, binds dsDNA.

This sequence belongs to the DnaA family. In terms of assembly, oligomerizes as a right-handed, spiral filament on DNA at oriC.

The protein resides in the cytoplasm. In terms of biological role, plays an essential role in the initiation and regulation of chromosomal replication. ATP-DnaA binds to the origin of replication (oriC) to initiate formation of the DNA replication initiation complex once per cell cycle. Binds the DnaA box (a 9 base pair repeat at the origin) and separates the double-stranded (ds)DNA. Forms a right-handed helical filament on oriC DNA; dsDNA binds to the exterior of the filament while single-stranded (ss)DNA is stabiized in the filament's interior. The ATP-DnaA-oriC complex binds and stabilizes one strand of the AT-rich DNA unwinding element (DUE), permitting loading of DNA polymerase. After initiation quickly degrades to an ADP-DnaA complex that is not apt for DNA replication. Binds acidic phospholipids. This chain is Chromosomal replication initiator protein DnaA, found in Wolbachia sp. subsp. Brugia malayi (strain TRS).